The sequence spans 359 residues: Guanine nucleotide-binding protein G(o) subunit alpha (359 aa).

The tract at residues 1–26 (MGGCVSATPEEREAKTRSSVIDRQQR) is disordered. Glycine 2 carries the N-myristoyl glycine lipid modification. Residue cysteine 4 is the site of S-palmitoyl cysteine attachment. The region spanning 34-359 (NTIKILLLGA…RENLEAANLL (326 aa)) is the G-alpha domain. The segment at 37 to 50 (KILLLGAGESGKST) is G1 motif. GTP is bound by residues 42-49 (GAGESGKS), 178-184 (LRSRVQT), 203-207 (DVGGQ), 272-275 (NKAD), and alanine 331. Residues serine 49 and threonine 184 each contribute to the Mg(2+) site. The G2 motif stretch occupies residues 176–184 (DVLRSRVQT). Residues 199–208 (YRVVDVGGQR) are G3 motif. Positions 268–275 (ILFLNKAD) are G4 motif. The tract at residues 329-334 (TTATDT) is G5 motif.

It belongs to the G-alpha family. G(i/o/t/z) subfamily. As to quaternary structure, g proteins are composed of 3 units; alpha, beta and gamma. The alpha chain contains the guanine nucleotide binding site.

In terms of biological role, guanine nucleotide-binding proteins (G proteins) are involved as modulators or transducers in various transmembrane signaling systems. The G(o) protein function is not clear. This chain is Guanine nucleotide-binding protein G(o) subunit alpha, found in Geodia cydonium (Sponge).